The sequence spans 331 residues: DNA polymerase IV (331 aa).

In terms of domain architecture, UmuC spans 1 to 174 (FFAAVEMRDN…LPLAKIPGVG (174 aa)). D92 contributes to the Mg(2+) binding site. E93 is a catalytic residue.

It belongs to the DNA polymerase type-Y family. Monomer. Mg(2+) is required as a cofactor.

The protein resides in the cytoplasm. The enzyme catalyses DNA(n) + a 2'-deoxyribonucleoside 5'-triphosphate = DNA(n+1) + diphosphate. Poorly processive, error-prone DNA polymerase involved in untargeted mutagenesis. Copies undamaged DNA at stalled replication forks, which arise in vivo from mismatched or misaligned primer ends. These misaligned primers can be extended by PolIV. Exhibits no 3'-5' exonuclease (proofreading) activity. May be involved in translesional synthesis, in conjunction with the beta clamp from PolIII. The polypeptide is DNA polymerase IV (Escherichia fergusonii).